The chain runs to 41 residues: Large ribosomal subunit protein bL36A (41 aa).

This sequence belongs to the bacterial ribosomal protein bL36 family.

This Vibrio cholerae serotype O1 (strain ATCC 39541 / Classical Ogawa 395 / O395) protein is Large ribosomal subunit protein bL36A.